An 882-amino-acid chain; its full sequence is Alanine--tRNA ligase (882 aa).

Positions 568, 572, 670, and 674 each coordinate Zn(2+).

This sequence belongs to the class-II aminoacyl-tRNA synthetase family. Zn(2+) is required as a cofactor.

The protein localises to the cytoplasm. The enzyme catalyses tRNA(Ala) + L-alanine + ATP = L-alanyl-tRNA(Ala) + AMP + diphosphate. Catalyzes the attachment of alanine to tRNA(Ala) in a two-step reaction: alanine is first activated by ATP to form Ala-AMP and then transferred to the acceptor end of tRNA(Ala). Also edits incorrectly charged Ser-tRNA(Ala) and Gly-tRNA(Ala) via its editing domain. The chain is Alanine--tRNA ligase from Lactobacillus johnsonii (strain CNCM I-12250 / La1 / NCC 533).